The primary structure comprises 145 residues: Ribosome maturation factor RimP (145 aa).

It belongs to the RimP family.

The protein localises to the cytoplasm. Required for maturation of 30S ribosomal subunits. This Borreliella afzelii (strain PKo) (Borrelia afzelii) protein is Ribosome maturation factor RimP.